The primary structure comprises 116 residues: MSFNDQQCKQPCVPPPCLQKTQEKCQAQAEDVCVSSCQDPCQDKCPQQAQEVCVSQCQELSQGNCPQQGQDPCLPPSQDQCLPQCAEPCQELAQTKCVEEFPQKVQEKCSSQSKGK.

The sequence is that of Proline-rich protein 9 (Prr9) from Mus musculus (Mouse).